A 245-amino-acid chain; its full sequence is Orotidine 5'-phosphate decarboxylase (245 aa).

Residues aspartate 22, lysine 44, aspartate 71–threonine 80, threonine 131, arginine 192, glutamine 201, glycine 221, and arginine 222 each bind substrate. Catalysis depends on lysine 73, which acts as the Proton donor.

The protein belongs to the OMP decarboxylase family. Type 1 subfamily. Homodimer.

It catalyses the reaction orotidine 5'-phosphate + H(+) = UMP + CO2. It participates in pyrimidine metabolism; UMP biosynthesis via de novo pathway; UMP from orotate: step 2/2. Functionally, catalyzes the decarboxylation of orotidine 5'-monophosphate (OMP) to uridine 5'-monophosphate (UMP). The sequence is that of Orotidine 5'-phosphate decarboxylase from Escherichia coli O81 (strain ED1a).